The chain runs to 131 residues: Protein Turandot M (131 aa).

The N-terminal stretch at 1–23 (MNPTIYLSCLMVFSVFLLGKVNA) is a signal peptide.

It belongs to the Turandot family.

The protein resides in the secreted. Its function is as follows. A humoral factor that may play a role in stress tolerance. Requires Mekk1 expression in the fat body to regulate response to septic injury and consequent immune response. In Drosophila melanogaster (Fruit fly), this protein is Protein Turandot M.